A 226-amino-acid chain; its full sequence is 2,3-bisphosphoglycerate-dependent phosphoglycerate mutase (226 aa).

Substrate-binding positions include 8–15 (RHGQSVWN), 21–22 (TG), arginine 58, 109–112 (ERMY), lysine 120, 136–137 (RR), and 180–181 (GN). Catalysis depends on histidine 9, which acts as the Tele-phosphohistidine intermediate. The Proton donor/acceptor role is filled by glutamate 109.

This sequence belongs to the phosphoglycerate mutase family. BPG-dependent PGAM subfamily.

It catalyses the reaction (2R)-2-phosphoglycerate = (2R)-3-phosphoglycerate. Its pathway is carbohydrate degradation; glycolysis; pyruvate from D-glyceraldehyde 3-phosphate: step 3/5. In terms of biological role, catalyzes the interconversion of 2-phosphoglycerate and 3-phosphoglycerate. The chain is 2,3-bisphosphoglycerate-dependent phosphoglycerate mutase from Chlamydia muridarum (strain MoPn / Nigg).